The chain runs to 555 residues: Glucose-6-phosphate isomerase (555 aa).

Glu-365 (proton donor) is an active-site residue. Catalysis depends on residues His-396 and Lys-522.

This sequence belongs to the GPI family.

It localises to the cytoplasm. It carries out the reaction alpha-D-glucose 6-phosphate = beta-D-fructose 6-phosphate. It participates in carbohydrate biosynthesis; gluconeogenesis. The protein operates within carbohydrate degradation; glycolysis; D-glyceraldehyde 3-phosphate and glycerone phosphate from D-glucose: step 2/4. Functionally, catalyzes the reversible isomerization of glucose-6-phosphate to fructose-6-phosphate. The sequence is that of Glucose-6-phosphate isomerase from Psychrobacter arcticus (strain DSM 17307 / VKM B-2377 / 273-4).